The primary structure comprises 379 residues: Putative beta-glucosidase 6 (379 aa).

An N-terminal signal peptide occupies residues 1–20; that stretch reads MEKTFALITIFLAFAFSGKC. Residues Gln-43, His-141, and 186–187 each bind a beta-D-glucoside; that span reads NE. The Proton donor role is filled by Glu-187. An intrachain disulfide couples Cys-206 to Cys-213. A glycan (N-linked (GlcNAc...) asparagine) is linked at Asn-217. Position 329 (Tyr-329) interacts with a beta-D-glucoside. Asn-362 is a glycosylation site (N-linked (GlcNAc...) asparagine).

Belongs to the glycosyl hydrolase 1 family.

It carries out the reaction Hydrolysis of terminal, non-reducing beta-D-glucosyl residues with release of beta-D-glucose.. The protein is Putative beta-glucosidase 6 of Arabidopsis thaliana (Mouse-ear cress).